Reading from the N-terminus, the 109-residue chain is Large ribosomal subunit protein eL30 (109 aa).

This sequence belongs to the eukaryotic ribosomal protein eL30 family. In terms of assembly, component of the large ribosomal subunit (LSU). Mature N.crassa ribosomes consist of a small (40S) and a large (60S) subunit. The 40S small subunit contains 1 molecule of ribosomal RNA (18S rRNA) and at least 32 different proteins. The large 60S subunit contains 3 rRNA molecules (26S, 5.8S and 5S rRNA) and at least 42 different proteins.

Its subcellular location is the cytoplasm. Component of the ribosome, a large ribonucleoprotein complex responsible for the synthesis of proteins in the cell. The small ribosomal subunit (SSU) binds messenger RNAs (mRNAs) and translates the encoded message by selecting cognate aminoacyl-transfer RNA (tRNA) molecules. The large subunit (LSU) contains the ribosomal catalytic site termed the peptidyl transferase center (PTC), which catalyzes the formation of peptide bonds, thereby polymerizing the amino acids delivered by tRNAs into a polypeptide chain. The nascent polypeptides leave the ribosome through a tunnel in the LSU and interact with protein factors that function in enzymatic processing, targeting, and the membrane insertion of nascent chains at the exit of the ribosomal tunnel. The polypeptide is Large ribosomal subunit protein eL30 (rpl-30) (Neurospora crassa (strain ATCC 24698 / 74-OR23-1A / CBS 708.71 / DSM 1257 / FGSC 987)).